A 270-amino-acid chain; its full sequence is 4-diphosphocytidyl-2-C-methyl-D-erythritol kinase (270 aa).

Residue lysine 8 is part of the active site. 90–100 contributes to the ATP binding site; sequence PIGAGLGGGSS. The active site involves aspartate 132.

It belongs to the GHMP kinase family. IspE subfamily.

It carries out the reaction 4-CDP-2-C-methyl-D-erythritol + ATP = 4-CDP-2-C-methyl-D-erythritol 2-phosphate + ADP + H(+). Its pathway is isoprenoid biosynthesis; isopentenyl diphosphate biosynthesis via DXP pathway; isopentenyl diphosphate from 1-deoxy-D-xylulose 5-phosphate: step 3/6. Catalyzes the phosphorylation of the position 2 hydroxy group of 4-diphosphocytidyl-2C-methyl-D-erythritol. This Cytophaga hutchinsonii (strain ATCC 33406 / DSM 1761 / CIP 103989 / NBRC 15051 / NCIMB 9469 / D465) protein is 4-diphosphocytidyl-2-C-methyl-D-erythritol kinase.